Consider the following 382-residue polypeptide: Prophage ps2 probable integrase (382 aa).

The Core-binding (CB) domain occupies 63–142; the sequence is AKFTDIAEEW…TLNLIFDYAV (80 aa). Residues 170–376 enclose the Tyr recombinase domain; the sequence is IQNKYLEQNE…TENMKSSIID (207 aa). Active-site residues include arginine 209, lysine 242, histidine 326, arginine 329, and histidine 352. Tyrosine 363 (O-(3'-phospho-DNA)-tyrosine intermediate) is an active-site residue.

This sequence belongs to the 'phage' integrase family.

This chain is Prophage ps2 probable integrase (ps201), found in Lactococcus lactis subsp. lactis (strain IL1403) (Streptococcus lactis).